The primary structure comprises 218 residues: Ribonuclease HII (218 aa).

The 190-residue stretch at 13–202 (DLVAGVDEVG…VRAAHEARAT (190 aa)) folds into the RNase H type-2 domain. A divalent metal cation contacts are provided by Asp-19, Glu-20, and Asp-111.

The protein belongs to the RNase HII family. Requires Mn(2+) as cofactor. Mg(2+) is required as a cofactor.

Its subcellular location is the cytoplasm. It catalyses the reaction Endonucleolytic cleavage to 5'-phosphomonoester.. Functionally, endonuclease that specifically degrades the RNA of RNA-DNA hybrids. The sequence is that of Ribonuclease HII from Pseudomonas syringae pv. syringae (strain B728a).